Consider the following 435-residue polypeptide: Ribulose bisphosphate carboxylase-like protein (435 aa).

Mg(2+)-binding residues include lysine 198, aspartate 200, and glutamate 201. N6-carboxylysine is present on lysine 198.

Belongs to the RuBisCO large chain family. Type IV subfamily. As to quaternary structure, homodimer. It depends on Mg(2+) as a cofactor.

Its function is as follows. May be involved in sulfur metabolism and oxidative stress response. Does not show RuBisCO activity. The polypeptide is Ribulose bisphosphate carboxylase-like protein (Chlorobaculum tepidum (strain ATCC 49652 / DSM 12025 / NBRC 103806 / TLS) (Chlorobium tepidum)).